Reading from the N-terminus, the 275-residue chain is 3-methyl-2-oxobutanoate hydroxymethyltransferase (275 aa).

Residues Asp-49 and Asp-88 each coordinate Mg(2+). Residues 49–50, Asp-88, and Lys-118 each bind 3-methyl-2-oxobutanoate; that span reads DS. Glu-120 contacts Mg(2+). The active-site Proton acceptor is the Glu-187.

This sequence belongs to the PanB family. In terms of assembly, homodecamer; pentamer of dimers. Mg(2+) serves as cofactor.

The protein localises to the cytoplasm. It catalyses the reaction 3-methyl-2-oxobutanoate + (6R)-5,10-methylene-5,6,7,8-tetrahydrofolate + H2O = 2-dehydropantoate + (6S)-5,6,7,8-tetrahydrofolate. It functions in the pathway cofactor biosynthesis; (R)-pantothenate biosynthesis; (R)-pantoate from 3-methyl-2-oxobutanoate: step 1/2. In terms of biological role, catalyzes the reversible reaction in which hydroxymethyl group from 5,10-methylenetetrahydrofolate is transferred onto alpha-ketoisovalerate to form ketopantoate. This chain is 3-methyl-2-oxobutanoate hydroxymethyltransferase, found in Bordetella petrii (strain ATCC BAA-461 / DSM 12804 / CCUG 43448).